Consider the following 539-residue polypeptide: Putative dimethylaniline monooxygenase [N-oxide-forming] 6 (539 aa).

FAD-binding positions include 9–13, glutamate 32, 40–41, and 61–62; these read GAGVS, LW, and NS. 195–198 contributes to the NADP(+) binding site; the sequence is SGSD. A helical transmembrane segment spans residues 518 to 538; the sequence is FYNLLKMLSFPLLLLAVTLTF.

Belongs to the FMO family. FAD serves as cofactor.

Its subcellular location is the microsome membrane. It is found in the endoplasmic reticulum membrane. The enzyme catalyses N,N-dimethylaniline + NADPH + O2 + H(+) = N,N-dimethylaniline N-oxide + NADP(+) + H2O. It is probable that this protein is only produced in very small quantity or not at all as the gene coding for it seems to be unable to produce full-length transcripts. This is Putative dimethylaniline monooxygenase [N-oxide-forming] 6 (FMO6P) from Homo sapiens (Human).